Reading from the N-terminus, the 1167-residue chain is ATP-dependent helicase/nuclease subunit A (1167 aa).

Residues 2–451 (KNWTAEQMRA…IELSLNFRSR (450 aa)) enclose the UvrD-like helicase ATP-binding domain. 23–30 (AAAGAGKT) serves as a coordination point for ATP. Residues 478–768 (KAFLKKGADY…RVMSVHKSKG (291 aa)) enclose the UvrD-like helicase C-terminal domain.

The protein belongs to the helicase family. AddA subfamily. As to quaternary structure, heterodimer of AddA and AddB/RexB. Mg(2+) is required as a cofactor.

It carries out the reaction Couples ATP hydrolysis with the unwinding of duplex DNA by translocating in the 3'-5' direction.. The enzyme catalyses ATP + H2O = ADP + phosphate + H(+). The heterodimer acts as both an ATP-dependent DNA helicase and an ATP-dependent, dual-direction single-stranded exonuclease. Recognizes the chi site generating a DNA molecule suitable for the initiation of homologous recombination. The AddA nuclease domain is required for chi fragment generation; this subunit has the helicase and 3' -&gt; 5' nuclease activities. This Carboxydothermus hydrogenoformans (strain ATCC BAA-161 / DSM 6008 / Z-2901) protein is ATP-dependent helicase/nuclease subunit A.